A 561-amino-acid polypeptide reads, in one-letter code: MIQAKEELLAALGLALAELVPGSDLAPAFENPKQAAHGDLAITAAMQLARPLRKNPRELAQALVEALGRQPAAQKWVDAMELAGPGFINLRLKPAARQQVVSAVLSQREGFGVRAPNGQRVMVEFVSANPTGPLHVGHGRQAALGDAICNVFATQGWAVHREFYYNDAGVQIGTLASSTQCRLRGLKPGDAEWPASAYNGDYIADIAREFLAGATVKADDRAFTASGEVEDIDSIRQFAVAYLRHEQDLDLQAFGVRFDHYYLESGLYSSGRVEEAVAKLTAAGKTFEEGGALWLRSTDYGDDKDRVMKKSDGTYTYFVPDVAYHIHKWERGFDKVINIQGSDHHGTIARVRAGLQAAGVGVPQGWPDYVLHKMVTVMKGGEEVKISKRAGSYVTLRDLIDWTSRDAVRFFLISRKADTEFVFDVDLALKANDENPVYYVQYAHARVCSVLARYVEEHQGDLATLADADLSLLAEPTEFALMNKLAEYPEMLGAAAADLAPHNVAFYLRDLAAHYHSYYGAVRFLDGAVEPMRARMALLEATAQVLRNALAVLGVSAPRKM.

The short motif at 128–138 (ANPTGPLHVGH) is the 'HIGH' region element.

The protein belongs to the class-I aminoacyl-tRNA synthetase family. In terms of assembly, monomer.

The protein resides in the cytoplasm. It carries out the reaction tRNA(Arg) + L-arginine + ATP = L-arginyl-tRNA(Arg) + AMP + diphosphate. This chain is Arginine--tRNA ligase, found in Leptothrix cholodnii (strain ATCC 51168 / LMG 8142 / SP-6) (Leptothrix discophora (strain SP-6)).